Consider the following 251-residue polypeptide: Phosphate import ATP-binding protein PstB 2 (251 aa).

The region spanning isoleucine 5–leucine 246 is the ABC transporter domain. ATP is bound at residue glycine 37 to serine 44.

It belongs to the ABC transporter superfamily. Phosphate importer (TC 3.A.1.7) family. As to quaternary structure, the complex is composed of two ATP-binding proteins (PstB), two transmembrane proteins (PstC and PstA) and a solute-binding protein (PstS).

It is found in the cell membrane. The catalysed reaction is phosphate(out) + ATP + H2O = ADP + 2 phosphate(in) + H(+). Part of the ABC transporter complex PstSACB involved in phosphate import. Responsible for energy coupling to the transport system. This chain is Phosphate import ATP-binding protein PstB 2, found in Lactobacillus acidophilus (strain ATCC 700396 / NCK56 / N2 / NCFM).